The primary structure comprises 417 residues: Serine--tRNA ligase (417 aa).

232–234 provides a ligand contact to L-serine; sequence TSE. ATP is bound at residue 263–265; it reads RKE. Residue glutamate 286 participates in L-serine binding. 350–353 provides a ligand contact to ATP; that stretch reads EISS. Serine 385 provides a ligand contact to L-serine.

It belongs to the class-II aminoacyl-tRNA synthetase family. Type-1 seryl-tRNA synthetase subfamily. As to quaternary structure, homodimer. The tRNA molecule binds across the dimer.

The protein resides in the cytoplasm. It carries out the reaction tRNA(Ser) + L-serine + ATP = L-seryl-tRNA(Ser) + AMP + diphosphate + H(+). The enzyme catalyses tRNA(Sec) + L-serine + ATP = L-seryl-tRNA(Sec) + AMP + diphosphate + H(+). The protein operates within aminoacyl-tRNA biosynthesis; selenocysteinyl-tRNA(Sec) biosynthesis; L-seryl-tRNA(Sec) from L-serine and tRNA(Sec): step 1/1. Catalyzes the attachment of serine to tRNA(Ser). Is also able to aminoacylate tRNA(Sec) with serine, to form the misacylated tRNA L-seryl-tRNA(Sec), which will be further converted into selenocysteinyl-tRNA(Sec). In Campylobacter hominis (strain ATCC BAA-381 / DSM 21671 / CCUG 45161 / LMG 19568 / NCTC 13146 / CH001A), this protein is Serine--tRNA ligase.